The primary structure comprises 130 residues: Small ribosomal subunit protein uS11 (130 aa).

It belongs to the universal ribosomal protein uS11 family. In terms of assembly, part of the 30S ribosomal subunit. Interacts with proteins S7 and S18. Binds to IF-3.

Located on the platform of the 30S subunit, it bridges several disparate RNA helices of the 16S rRNA. Forms part of the Shine-Dalgarno cleft in the 70S ribosome. This is Small ribosomal subunit protein uS11 from Gluconobacter oxydans (strain 621H) (Gluconobacter suboxydans).